The following is a 2892-amino-acid chain: E3 ubiquitin-protein ligase lubel (2892 aa).

8 disordered regions span residues 23 to 55 (DRIG…KSTP), 125 to 252 (KQHM…QLEK), 395 to 423 (SQQH…QFGS), 483 to 631 (PSAA…ESEG), 644 to 672 (QKLQ…ENTQ), 685 to 737 (AHEE…PDHE), 757 to 865 (CCKT…DNSL), and 949 to 975 (DRFT…QQES). Low complexity predominate over residues 40–52 (GLPKAPALPPKAK). Positions 189 to 198 (GWRGSLGGGA) are enriched in gly residues. Polar residues predominate over residues 206–215 (ATSSANQMNN). 2 stretches are compositionally biased toward low complexity: residues 402 to 412 (AQHPHQALPQH) and 483 to 503 (PSAA…TPSR). Residues 516–528 (VDDELTDDEDSDQ) are compositionally biased toward acidic residues. The span at 535–546 (VSNRSGMTSASR) shows a compositional bias: polar residues. A compositionally biased stretch (basic residues) spans 547–560 (SQHHQNHIQPRQRR). Polar residues predominate over residues 606–623 (GTLTRNKTATDSARTSRI). The segment covering 647–670 (QEADQHKSSKKAEPKRKPEMKDEN) has biased composition (basic and acidic residues). A compositionally biased stretch (polar residues) spans 801–813 (KPTTKSQQPSQKS). 2 stretches are compositionally biased toward low complexity: residues 818-837 (SKTT…AVNS) and 846-856 (KTPSKSTLKTS). Residues 1042–1187 (MHIILKELEL…LMRIWGSPNG (146 aa)) enclose the UBA-like 1 domain. Disordered stretches follow at residues 1214–1252 (LQPP…SPYQ), 1477–1520 (LPTA…KLET), 1557–1653 (AEVQ…KILS), 1717–2019 (STTI…NLSE), 2032–2082 (RDEI…EGNT), 2191–2316 (SAPP…PLRS), and 2411–2431 (DYET…EPQK). Positions 1241 to 1252 (VKSTYATPSPYQ) are enriched in polar residues. The segment covering 1510–1519 (EELRQQEKLE) has biased composition (basic and acidic residues). Over residues 1560–1571 (QVQSDDQPSTSR) the composition is skewed to polar residues. Over residues 1576–1587 (RAKRSQQSRKGR) the composition is skewed to basic residues. Over residues 1595–1607 (PTNRTKLPNNIDQ) the composition is skewed to polar residues. Over residues 1608 to 1627 (KVNESKTAAKETEAVKDKDL) the composition is skewed to basic and acidic residues. 3 stretches are compositionally biased toward polar residues: residues 1630 to 1653 (AASN…KILS), 1717 to 1726 (STTISEQSEG), and 1764 to 1779 (KSPT…TSHI). Residues 1822–1834 (LSSSSLRSESRSS) are compositionally biased toward low complexity. Residues 1859–1881 (TVSSPKSEQLSDNQEVNLVSQET) show a composition bias toward polar residues. Residues 1918–1927 (DSDEVFEDAP) are compositionally biased toward acidic residues. The segment covering 1953 to 1963 (DGQRAETKSPE) has biased composition (basic and acidic residues). Acidic residues-rich tracts occupy residues 1964–1975 (DEVVILLDEESQ) and 2036–2079 (SMDE…DGEE). 2 stretches are compositionally biased toward low complexity: residues 2214–2230 (PSEV…ALPI) and 2269–2291 (SGTA…TVSK). Polar residues predominate over residues 2297–2308 (NEPTNKSNSTPL). Acidic residues predominate over residues 2411-2425 (DYETSATEEEQEEPN). The region spanning 2457 to 2513 (DPAILARKYVDQELVTNIAEAQIAATLVSMKFSEDVALWAARECSDLDQAIAMLQQE) is the UBA-like 2 domain. Residues 2510–2748 (LQQECELCMN…LGLHAHHPRN (239 aa)) are TRIAD supradomain. Residues Cys2514, Cys2517, Cys2537, Cys2540, Cys2618, Cys2621, Cys2636, Cys2639, Cys2644, Cys2647, His2655, Cys2660, Cys2690, and Cys2693 each contribute to the Zn(2+) site. An RING-type 1 zinc finger spans residues 2514 to 2564 (CELCMNSYPMNQMVSMLKCLHKCCKQCAKSYFTVQITDRSINDCSCPFCKL). Positions 2514–2892 (CELCMNSYPM…IKKHIPLKSA (379 aa)) are necessary for linear polyubiquitination and sufficent for inducing DptA in the intestine. The segment at 2601–2660 (QRKLRDRSLLQDPNFKWCIQCSSGFFARPKQKRLICPDCGSVTCAQCRKPWERQHEGSSC) adopts an IBR-type zinc-finger fold. The RING-type 2; atypical zinc finger occupies 2690–2720 (CPKCKFRYSLARGGCMHFTCTQCKFEFCYGC). Cys2704 is a catalytic residue. 2 residues coordinate Zn(2+): Cys2709 and Cys2712.

Belongs to the RBR family.

The catalysed reaction is [E2 ubiquitin-conjugating enzyme]-S-ubiquitinyl-L-cysteine + [acceptor protein]-L-lysine = [E2 ubiquitin-conjugating enzyme]-L-cysteine + [acceptor protein]-N(6)-ubiquitinyl-L-lysine.. Functionally, E3 ubiquitin-protein ligase which conjugates linear 'Met-1'- and 'Lys-63'-linked polyubiquitin chains to substrates and plays a crucial role in the NF-kappa-B intestinal inflammatory response to oral infection and in the heat stress response. Preferentially interacts with 'Lys-63'-linked, and to a lesser extent 'Lys-48'-linked, polyubiquitin chains. Upon oral infection with a Gram-negative bacterium E.carotovora subsp. carotovora 15, functions with the E2 ubiquitin-conjugating enzyme Ubc10 to mediate the conjugation of 'Lys-63'- and linear 'Met-1'-linked polyubiquitin chains to the substrate key which is essential for activation of the NF-kappa-B signaling cascade in the adult intestinal epithelium. It is not required for systemic immune response to septic infection with either E.carotovora subsp. carotovora 15 or Gram-positive M.luteus bacteria. Function in controlling linear ubiquitination is also essential for regulating the heat stress response in adults. This function may require the E2 ubiquitin-conjugating enzymes Ubc10 or eff. In Drosophila melanogaster (Fruit fly), this protein is E3 ubiquitin-protein ligase lubel.